Reading from the N-terminus, the 81-residue chain is MNREGAPGKSPEEMYIQQKVRVLLMLRKMGSNLTASEEEFLRTYAGVVNSQLSQLPPHSIDQGAEDVVMAFSRSETEDRRQ.

Position 59 is a phosphoserine (serine 59).

This sequence belongs to the CTNNBIP1 family. In terms of assembly, binds CTNNB1.

Its subcellular location is the cytoplasm. It is found in the nucleus. Functionally, prevents the interaction between CTNNB1 and TCF family members, and acts as a negative regulator of the Wnt signaling pathway. In Homo sapiens (Human), this protein is Beta-catenin-interacting protein 1 (CTNNBIP1).